The chain runs to 508 residues: Cytochrome P450 4A12 (508 aa).

The next 2 membrane-spanning stretches (helical) occupy residues Ile-10–Leu-30 and Phe-120–His-140. Glu-319 lines the heme pocket. Position 438 is a phosphoserine (Ser-438). Cys-455 is a heme binding site.

Belongs to the cytochrome P450 family. It depends on heme as a cofactor. As to expression, expressed at proximal straight tubules and preglomerular arteries of the outer medulla as well in the cortex regions of kidney (at protein level).

It localises to the endoplasmic reticulum membrane. The protein localises to the microsome membrane. It carries out the reaction an organic molecule + reduced [NADPH--hemoprotein reductase] + O2 = an alcohol + oxidized [NADPH--hemoprotein reductase] + H2O + H(+). The enzyme catalyses dodecanoate + reduced [NADPH--hemoprotein reductase] + O2 = 12-hydroxydodecanoate + oxidized [NADPH--hemoprotein reductase] + H2O + H(+). The catalysed reaction is dodecanoate + reduced [NADPH--hemoprotein reductase] + O2 = (11R)-hydroxydodecanoate + oxidized [NADPH--hemoprotein reductase] + H2O + H(+). It catalyses the reaction (5Z,8Z,11Z,14Z)-eicosatetraenoate + reduced [NADPH--hemoprotein reductase] + O2 = 20-hydroxy-(5Z,8Z,11Z,14Z)-eicosatetraenoate + oxidized [NADPH--hemoprotein reductase] + H2O + H(+). It carries out the reaction prostaglandin A1 + reduced [NADPH--hemoprotein reductase] + O2 = 20-hydroxy prostaglandin A1 + oxidized [NADPH--hemoprotein reductase] + H2O + H(+). It functions in the pathway lipid metabolism; fatty acid metabolism. Its activity is regulated as follows. Activated by cytochrome b5 and phosphatidylserine. Its function is as follows. A cytochrome P450 monooxygenase involved in the metabolism of fatty acids. Catalyzes predominantly the oxidation of the terminal carbon (omega-oxidation) of saturated and unsaturated fatty acids. May act as a major omega-hydroxylase for dodecanoic (lauric) acid in kidney. At preglomerular arteries, may participate in omega-hydroxylation of (5Z,8Z,11Z,14Z)-eicosatetraenoic acid (arachidonate) to 20-hydroxyeicosatetraenoic acid (20-HETE), a signaling molecule acting both as vasoconstrictive and natriuretic with overall effect on arterial blood pressure. Can also catalyze the oxidation of the penultimate carbon (omega-1 oxidation) of fatty acids with lower efficiency, displaying a preference for the (R)-stereoisomer. Mechanistically, uses molecular oxygen inserting one oxygen atom into a substrate, and reducing the second into a water molecule, with two electrons provided by NADPH via cytochrome P450 reductase (NADPH--hemoprotein reductase). The sequence is that of Cytochrome P450 4A12 (Cyp4a12) from Rattus norvegicus (Rat).